The following is a 792-amino-acid chain: Protocadherin beta-18 (792 aa).

The N-terminal stretch at 1–26 (MAARGSCVSRQRQVLFLFLLGGLCLA) is a signal peptide. 6 consecutive Cadherin domains span residues 27 to 133 (GSEL…SPIF), 134 to 242 (QDKK…APQF), 243 to 347 (PQEL…APEL), 348 to 451 (IMSS…APAF), 452 to 561 (NQTS…APFV), and 568 to 676 (ASAP…LPEV). Asn169 carries N-linked (GlcNAc...) asparagine glycosylation. N-linked (GlcNAc...) asparagine glycosylation is found at Asn418 and Asn452. Residues 693 to 713 (VIALASVSSLFLLSVLLFVGV) traverse the membrane as a helical segment.

Its subcellular location is the cell membrane. Potential calcium-dependent cell-adhesion protein. The sequence is that of Protocadherin beta-18 (Pcdhb18) from Mus musculus (Mouse).